Consider the following 158-residue polypeptide: Phosphopantetheine adenylyltransferase (158 aa).

Position 10 (T10) interacts with substrate. ATP contacts are provided by residues 10-11 (TF) and H18. K42, L74, and R88 together coordinate substrate. Residues 89-91 (GIR), E99, and 124-130 (WRYLSST) each bind ATP.

Belongs to the bacterial CoaD family. Homohexamer. Mg(2+) is required as a cofactor.

Its subcellular location is the cytoplasm. It catalyses the reaction (R)-4'-phosphopantetheine + ATP + H(+) = 3'-dephospho-CoA + diphosphate. The protein operates within cofactor biosynthesis; coenzyme A biosynthesis; CoA from (R)-pantothenate: step 4/5. Reversibly transfers an adenylyl group from ATP to 4'-phosphopantetheine, yielding dephospho-CoA (dPCoA) and pyrophosphate. The protein is Phosphopantetheine adenylyltransferase of Actinobacillus pleuropneumoniae serotype 7 (strain AP76).